The chain runs to 275 residues: Large ribosomal subunit protein uL2c (275 aa).

Disordered stretches follow at residues 1 to 30 and 225 to 275; these read MAIH…QKQK and MNPV…RRRK. Residues 21–30 are compositionally biased toward polar residues; sequence QAKSTPQKQK.

It belongs to the universal ribosomal protein uL2 family. As to quaternary structure, part of the 50S ribosomal subunit.

The protein localises to the plastid. Its subcellular location is the chloroplast. This is Large ribosomal subunit protein uL2c (rpl2) from Illicium oligandrum (Star anise).